A 302-amino-acid chain; its full sequence is Rab effector Noc2 (302 aa).

A RabBD domain is found at 41 to 158 (QRRSQCLSPG…KRSGAWFYKG (118 aa)). An FYVE-type zinc finger spans residues 89-146 (GNGLSQCLLCGEVLGFLGSSSVFCKDCRKKVCTKCGIEASPGQKRPLWLCKICSEQRE). Cys-95, Cys-98, Cys-112, Cys-115, Cys-120, Cys-123, Cys-138, and Cys-141 together coordinate Zn(2+). Positions 174–302 (DPHFRPLPVE…KRHTWATPRY (129 aa)) are disordered. Residues 185 to 197 (TETQPPSAETSRV) are compositionally biased toward polar residues. Ser-248 bears the Phosphoserine mark. Residues 258-269 (SHLSGSQSSLGS) are compositionally biased toward low complexity.

Recruited to dense-core vesicles through specific interaction with RAB27A in endocrine cells. Interacts with RAB3A, RAB3B, RAB3C and RAB3D. Interacts with ZYX. In terms of tissue distribution, highly expressed in pancreatic islets. High to moderate expression in adrenal gland, pituitary gland and ovary.

It localises to the cytoplasm. Its subcellular location is the cytoplasmic vesicle. It is found in the secretory vesicle membrane. In terms of biological role, rab GTPase effector involved in the late steps of regulated exocytosis, both in endocrine and exocrine cells. Regulates the exocytosis of dense-core vesicles in neuroendocrine cells through interaction with RAB27A. Acts as a potential RAB3B effector protein in epithelial cells. In Mus musculus (Mouse), this protein is Rab effector Noc2 (Rph3al).